Here is a 232-residue protein sequence, read N- to C-terminus: Phosphate import ATP-binding protein PstB (232 aa).

The region spanning 1 to 227 (MFNINMEIKE…PKDRRTENYI (227 aa)) is the ABC transporter domain. 18-25 (GPSGCGKT) serves as a coordination point for ATP.

Belongs to the ABC transporter superfamily. Phosphate importer (TC 3.A.1.7) family. The complex is composed of two ATP-binding proteins (PstB), two transmembrane proteins (PstC and PstA) and a solute-binding protein (PstS).

The protein localises to the cell membrane. It catalyses the reaction phosphate(out) + ATP + H2O = ADP + 2 phosphate(in) + H(+). Part of the ABC transporter complex PstSACB involved in phosphate import. Responsible for energy coupling to the transport system. This is Phosphate import ATP-binding protein PstB from Mycoplasma mycoides subsp. mycoides SC (strain CCUG 32753 / NCTC 10114 / PG1).